The primary structure comprises 170 residues: Nucleoside-triphosphatase THEP1 (170 aa).

ATP is bound by residues 7-14 (GMPGVGKT) and 98-105 (IIIIDELG).

The protein belongs to the THEP1 NTPase family.

The catalysed reaction is a ribonucleoside 5'-triphosphate + H2O = a ribonucleoside 5'-diphosphate + phosphate + H(+). In terms of biological role, has nucleotide phosphatase activity towards ATP, GTP, CTP, TTP and UTP. May hydrolyze nucleoside diphosphates with lower efficiency. This Methanocaldococcus jannaschii (strain ATCC 43067 / DSM 2661 / JAL-1 / JCM 10045 / NBRC 100440) (Methanococcus jannaschii) protein is Nucleoside-triphosphatase THEP1.